A 120-amino-acid chain; its full sequence is uncharacterized protein (120 aa).

The signal sequence occupies residues 1–27 (MPKIGVSLIVLIMLIIFLAGCNKNEQN).

This is an uncharacterized protein from Bacillus subtilis (strain 168).